The sequence spans 268 residues: Secreted RxLR effector protein 5 (268 aa).

An N-terminal signal peptide occupies residues M1–A21. Residues R48–R63 carry the RxLR-dEER motif. The N-linked (GlcNAc...) asparagine glycan is linked to N104.

Belongs to the RxLR effector family.

Its subcellular location is the secreted. It is found in the host nucleus. Its function is as follows. Effector that acts as a broad suppressor of cell death to interrupt plant immunity. Inhibits cell death induced by cell death-inducing proteins, including the PAMP elicitor INF1 from P.infestans. The sequence is that of Secreted RxLR effector protein 5 from Plasmopara viticola (Downy mildew of grapevine).